The sequence spans 138 residues: Small ribosomal subunit protein uS11c (138 aa).

Belongs to the universal ribosomal protein uS11 family. As to quaternary structure, part of the 30S ribosomal subunit.

It is found in the plastid. This chain is Small ribosomal subunit protein uS11c, found in Cuscuta obtusiflora (Peruvian dodder).